Here is a 40-residue protein sequence, read N- to C-terminus: Photosystem II reaction center protein J (40 aa).

The helical transmembrane segment at 8–28 (IPLWLIGTVTGIPVIGSIGIF) threads the bilayer.

It belongs to the PsbJ family. PSII is composed of 1 copy each of membrane proteins PsbA, PsbB, PsbC, PsbD, PsbE, PsbF, PsbH, PsbI, PsbJ, PsbK, PsbL, PsbM, PsbT, PsbX, PsbY, PsbZ, Psb30/Ycf12, at least 3 peripheral proteins of the oxygen-evolving complex and a large number of cofactors. It forms dimeric complexes.

The protein resides in the plastid. It localises to the chloroplast thylakoid membrane. In terms of biological role, one of the components of the core complex of photosystem II (PSII). PSII is a light-driven water:plastoquinone oxidoreductase that uses light energy to abstract electrons from H(2)O, generating O(2) and a proton gradient subsequently used for ATP formation. It consists of a core antenna complex that captures photons, and an electron transfer chain that converts photonic excitation into a charge separation. The sequence is that of Photosystem II reaction center protein J from Chloranthus spicatus (Chulantree).